The primary structure comprises 326 residues: G-protein coupled receptor 1 (326 aa).

At serine 2 the chain carries N-acetylserine. Over 2-23 (SAVLTAGGGLTAGDRSIITAIN) the chain is Extracellular. Residues 24–44 (TGASSLSFVGSAFIVLCYCLF) form a helical membrane-spanning segment. The Cytoplasmic segment spans residues 45-51 (KELRKFS). Residues 52 to 72 (FKLVFYLALSDMLCSFFLIVG) form a helical membrane-spanning segment. At 73 to 84 (DPSKGFICYAQG) the chain is on the extracellular side. Cysteine 80 and cysteine 151 form a disulfide bridge. A helical membrane pass occupies residues 85 to 105 (YTTHFFCVASFLWTTTIAFTL). At 106–120 (HRTVVKHKTDVEDLE) the chain is on the cytoplasmic side. A helical transmembrane segment spans residues 121–141 (AMFHLYVWGTSLVVTVIRSFG). The Extracellular portion of the chain corresponds to 142-160 (NNHSHLGPWCWTQTGLKGK). The N-linked (GlcNAc...) asparagine glycan is linked to asparagine 143. A helical membrane pass occupies residues 161-181 (AVHFLTFYAPLWGAILYNGFT). Residues 182–213 (YFQVIRMLRNARRMAVGMSDRVDQFDNRAELK) are Cytoplasmic-facing. The helical transmembrane segment at 214–234 (VLNRWGYYPLILIGSWAFGTI) threads the bilayer. Topologically, residues 235 to 246 (NRIHDFIEPGHK) are extracellular. Residues 247 to 267 (IFWLSVLDVGTAALMGLFNSI) form a helical membrane-spanning segment. Residues 268 to 326 (AYGFNSSVRRAIHERLELFLPERLYRWLPSNFRPKNHLILHQQQQQRSEMVSLKTEDQQ) are Cytoplasmic-facing.

It belongs to the G-protein coupled receptor 2 family. In terms of assembly, interacts with GPA1. As to expression, mostly present in the meristematic regions. Expressed at low levels in seedlings, vascular tissues of cotyledons, hypocotyl, and roots, stems, leaves, flowering buds and siliques. In dark-grown seedlings, localized in the cotyledons and the hook.

Its subcellular location is the cell membrane. Functionally, together with GPA1, may regulate the cell cycle via a signaling cascade that uses phosphatidylinositol-specific phospholipase C (PI-PLC) as an effector and inositol 1,4,5-trisphosphate(IP(3)) as a second messenger. Promotes PI-PLC activity and IP(3) accumulation. Involved in the blue light (BL) signaling. Together with GPA1 and ADT3, required for BL-mediated synthesis of phenylpyruvate and subsequently of phenylalanine (Phe), in etiolated seedlings. Probably involved in cytokinin signal transduction. Plays a positive role in gibberellin- (GA) and brassinosteroid- (BR) regulated seed germination, probably independently of a heterotrimeric G-protein. Mediates seed dormancy abolition, and promotes seed germination and flowering. In Arabidopsis thaliana (Mouse-ear cress), this protein is G-protein coupled receptor 1 (GCR1).